Here is a 173-residue protein sequence, read N- to C-terminus: Large ribosomal RNA subunit accumulation protein YceD (173 aa).

It belongs to the DUF177 domain family.

Plays a role in synthesis, processing and/or stability of 23S rRNA. This is Large ribosomal RNA subunit accumulation protein YceD (yceD) from Escherichia coli O157:H7.